The primary structure comprises 145 residues: Ribonuclease VapC24 (145 aa).

The PINc domain occupies 4–123 (IDTNILLYAQ…RHHGVDEFAT (120 aa)). Mg(2+) contacts are provided by Asp5 and Asp106.

It belongs to the PINc/VapC protein family. Requires Mg(2+) as cofactor.

Toxic component of a type II toxin-antitoxin (TA) system. An RNase. Its cognate antitoxin is VapB24. This is Ribonuclease VapC24 from Mycobacterium tuberculosis (strain CDC 1551 / Oshkosh).